Consider the following 324-residue polypeptide: Glyoxylate/hydroxypyruvate reductase B (324 aa).

Catalysis depends on residues Arg237 and Glu266. His285 functions as the Proton donor in the catalytic mechanism.

It belongs to the D-isomer specific 2-hydroxyacid dehydrogenase family. GhrB subfamily. In terms of assembly, homodimer.

Its subcellular location is the cytoplasm. The enzyme catalyses glycolate + NADP(+) = glyoxylate + NADPH + H(+). The catalysed reaction is (R)-glycerate + NAD(+) = 3-hydroxypyruvate + NADH + H(+). It catalyses the reaction (R)-glycerate + NADP(+) = 3-hydroxypyruvate + NADPH + H(+). Functionally, catalyzes the NADPH-dependent reduction of glyoxylate and hydroxypyruvate into glycolate and glycerate, respectively. The sequence is that of Glyoxylate/hydroxypyruvate reductase B from Escherichia coli (strain SMS-3-5 / SECEC).